The primary structure comprises 259 residues: Glutamate racemase (259 aa).

Substrate is bound by residues 7–8 (DS) and 39–40 (YG). Cys70 serves as the catalytic Proton donor/acceptor. 71–72 (NT) lines the substrate pocket. Catalysis depends on Cys180, which acts as the Proton donor/acceptor. 181-182 (TH) lines the substrate pocket.

This sequence belongs to the aspartate/glutamate racemases family.

It catalyses the reaction L-glutamate = D-glutamate. It functions in the pathway cell wall biogenesis; peptidoglycan biosynthesis. Provides the (R)-glutamate required for cell wall biosynthesis. The polypeptide is Glutamate racemase (Persephonella marina (strain DSM 14350 / EX-H1)).